Consider the following 234-residue polypeptide: tRNA (guanine-N(1)-)-methyltransferase (234 aa).

S-adenosyl-L-methionine is bound by residues Gly-112 and 132–137 (IGDFIL).

It belongs to the RNA methyltransferase TrmD family. In terms of assembly, homodimer.

It localises to the cytoplasm. The enzyme catalyses guanosine(37) in tRNA + S-adenosyl-L-methionine = N(1)-methylguanosine(37) in tRNA + S-adenosyl-L-homocysteine + H(+). Functionally, specifically methylates guanosine-37 in various tRNAs. The protein is tRNA (guanine-N(1)-)-methyltransferase of Campylobacter jejuni subsp. doylei (strain ATCC BAA-1458 / RM4099 / 269.97).